A 172-amino-acid chain; its full sequence is Adenine phosphoribosyltransferase (172 aa).

The protein belongs to the purine/pyrimidine phosphoribosyltransferase family. As to quaternary structure, homodimer.

It localises to the cytoplasm. It carries out the reaction AMP + diphosphate = 5-phospho-alpha-D-ribose 1-diphosphate + adenine. Its pathway is purine metabolism; AMP biosynthesis via salvage pathway; AMP from adenine: step 1/1. Functionally, catalyzes a salvage reaction resulting in the formation of AMP, that is energically less costly than de novo synthesis. This Streptococcus pyogenes serotype M5 (strain Manfredo) protein is Adenine phosphoribosyltransferase.